A 185-amino-acid polypeptide reads, in one-letter code: Threonylcarbamoyl-AMP synthase (185 aa).

Residues 4-185 (SWRVQQAAQD…IATAQIVRAG (182 aa)) form the YrdC-like domain.

It belongs to the SUA5 family. TsaC subfamily.

It is found in the cytoplasm. It carries out the reaction L-threonine + hydrogencarbonate + ATP = L-threonylcarbamoyladenylate + diphosphate + H2O. Functionally, required for the formation of a threonylcarbamoyl group on adenosine at position 37 (t(6)A37) in tRNAs that read codons beginning with adenine. Catalyzes the conversion of L-threonine, HCO(3)(-)/CO(2) and ATP to give threonylcarbamoyl-AMP (TC-AMP) as the acyladenylate intermediate, with the release of diphosphate. This is Threonylcarbamoyl-AMP synthase from Pseudomonas syringae pv. syringae (strain B728a).